Consider the following 338-residue polypeptide: Flap endonuclease 1 (338 aa).

The N-domain stretch occupies residues 1 to 98; sequence MGTDIGDLLQ…ETLSRRKEVR (98 aa). 7 residues coordinate Mg(2+): Asp-27, Asp-80, Glu-152, Glu-154, Asp-173, Asp-175, and Asp-236. Residues 116 to 257 form an I-domain region; it reads AAYKYAQASS…TALKLIKKHG (142 aa). Residues 330–338 are interaction with PCNA; it reads RQKTLDQWF.

The protein belongs to the XPG/RAD2 endonuclease family. FEN1 subfamily. As to quaternary structure, interacts with PCNA. PCNA stimulates the nuclease activity without altering cleavage specificity. Mg(2+) is required as a cofactor.

In terms of biological role, structure-specific nuclease with 5'-flap endonuclease and 5'-3' exonuclease activities involved in DNA replication and repair. During DNA replication, cleaves the 5'-overhanging flap structure that is generated by displacement synthesis when DNA polymerase encounters the 5'-end of a downstream Okazaki fragment. Binds the unpaired 3'-DNA end and kinks the DNA to facilitate 5' cleavage specificity. Cleaves one nucleotide into the double-stranded DNA from the junction in flap DNA, leaving a nick for ligation. Also involved in the base excision repair (BER) pathway. Acts as a genome stabilization factor that prevents flaps from equilibrating into structures that lead to duplications and deletions. Also possesses 5'-3' exonuclease activity on nicked or gapped double-stranded DNA. In Methanosarcina acetivorans (strain ATCC 35395 / DSM 2834 / JCM 12185 / C2A), this protein is Flap endonuclease 1.